The sequence spans 337 residues: Dihydroorotate dehydrogenase (quinone) (337 aa).

FMN contacts are provided by residues 61 to 65 (AGLDK) and Thr85. Lys65 contacts substrate. Position 110–114 (110–114 (NRMGF)) interacts with substrate. 2 residues coordinate FMN: Asn138 and Asn171. Asn171 provides a ligand contact to substrate. The Nucleophile role is filled by Ser174. Asn176 serves as a coordination point for substrate. Lys216 and Thr244 together coordinate FMN. Residue 245-246 (NT) coordinates substrate. FMN is bound by residues Gly267, Gly296, and 317 to 318 (YS).

The protein belongs to the dihydroorotate dehydrogenase family. Type 2 subfamily. As to quaternary structure, monomer. The cofactor is FMN.

The protein localises to the cell membrane. It carries out the reaction (S)-dihydroorotate + a quinone = orotate + a quinol. It functions in the pathway pyrimidine metabolism; UMP biosynthesis via de novo pathway; orotate from (S)-dihydroorotate (quinone route): step 1/1. Its function is as follows. Catalyzes the conversion of dihydroorotate to orotate with quinone as electron acceptor. The sequence is that of Dihydroorotate dehydrogenase (quinone) from Thiobacillus denitrificans (strain ATCC 25259 / T1).